The sequence spans 155 residues: 3-hydroxyacyl-[acyl-carrier-protein] dehydratase FabZ (155 aa).

His58 is a catalytic residue.

This sequence belongs to the thioester dehydratase family. FabZ subfamily.

The protein localises to the cytoplasm. It carries out the reaction a (3R)-hydroxyacyl-[ACP] = a (2E)-enoyl-[ACP] + H2O. In terms of biological role, involved in unsaturated fatty acids biosynthesis. Catalyzes the dehydration of short chain beta-hydroxyacyl-ACPs and long chain saturated and unsaturated beta-hydroxyacyl-ACPs. This is 3-hydroxyacyl-[acyl-carrier-protein] dehydratase FabZ from Rhizobium leguminosarum bv. trifolii (strain WSM2304).